The primary structure comprises 114 residues: Protein U68 (114 aa).

Belongs to the herpesviridae UL96 family.

This chain is Protein U68 (U68), found in Homo sapiens (Human).